A 337-amino-acid chain; its full sequence is Probable uridine nucleosidase 2 (337 aa).

His-260 is a catalytic residue.

The protein belongs to the IUNH family.

It localises to the cytoplasm. The catalysed reaction is uridine + H2O = D-ribose + uracil. Involved in pyrimidine breakdown. The sequence is that of Probable uridine nucleosidase 2 (URH2) from Oryza sativa subsp. japonica (Rice).